A 607-amino-acid polypeptide reads, in one-letter code: MGVDELSHLKFSLLLESSACNDLSGFKSLVEEEGLESIDGSGLWYGRRLGSKKMGFEERTPLMIAALFGSKEVVDYIISTGLVDVNRSCGSDGATALHCAVSGLSANSLEIVTLLLKGSANPDSCDAYGNKPGDVIFPCLSPVFSARMKVLERLLKGNDDLNEVNGQEESEPEVEVEVEVSPPRGSERKEYPVDPTLPDIKNGVYGTDEFRMYAFKIKPCSRAYSHDWTECPFVHPGENARRRDPRKYHYSCVPCPEFRKGSCSRGDTCEYAHGIFECWLHPAQYRTRLCKDETNCSRRVCFFAHKPEELRPLYPSTGSGVPSPRSSFSSCNSSTAFDMGPISPLPIGATTTPPLSPNGVSSPIGGGKTWMNWPNITPPALQLPGSRLKSALNAREIDFSEEMQSLTSPTTWNNTPMSSPFSGKGMNRLAGGAMSPVNSLSDMFGTEDNTSGLQIRRSVINPQLHSNSLSSSPVGANSLFSMDSSAVLASRAAEFAKQRSQSFIERNNGLNHHPAISSMTTTCLNDWGSLDGKLDWSVQGDELQKLRKSTSFRLRAGGMESRLPNEGTGLEEPDVSWVEPLVKEPQETRLAPVWMEQSYMETEQTVA.

2 ANK repeats span residues 57-87 and 92-124; these read EERT…DVNR and DGAT…NPDS. The span at 161 to 178 shows a compositional bias: acidic residues; it reads LNEVNGQEESEPEVEVEV. The interval 161 to 193 is disordered; it reads LNEVNGQEESEPEVEVEVEVSPPRGSERKEYPV. C3H1-type zinc fingers lie at residues 254 to 276 and 284 to 308; these read PCPE…HGIF and QYRT…HKPE. The disordered stretch occupies residues 342–363; that stretch reads ISPLPIGATTTPPLSPNGVSSP. Over residues 349–361 the composition is skewed to polar residues; the sequence is ATTTPPLSPNGVS.

The chain is Zinc finger CCCH domain-containing protein 66 from Arabidopsis thaliana (Mouse-ear cress).